A 396-amino-acid chain; its full sequence is 1-deoxy-D-xylulose 5-phosphate reductoisomerase (396 aa).

Positions 10, 11, 12, 13, 38, and 123 each coordinate NADPH. A 1-deoxy-D-xylulose 5-phosphate-binding site is contributed by Lys124. Glu125 serves as a coordination point for NADPH. Residue Asp149 coordinates Mn(2+). Residues Ser150, Glu151, Ser185, and His208 each coordinate 1-deoxy-D-xylulose 5-phosphate. Glu151 is a binding site for Mn(2+). Gly214 contacts NADPH. Residues Ser221, Asn226, Lys227, and Glu230 each coordinate 1-deoxy-D-xylulose 5-phosphate. Glu230 contributes to the Mn(2+) binding site.

It belongs to the DXR family. Mg(2+) serves as cofactor. Requires Mn(2+) as cofactor.

It carries out the reaction 2-C-methyl-D-erythritol 4-phosphate + NADP(+) = 1-deoxy-D-xylulose 5-phosphate + NADPH + H(+). The protein operates within isoprenoid biosynthesis; isopentenyl diphosphate biosynthesis via DXP pathway; isopentenyl diphosphate from 1-deoxy-D-xylulose 5-phosphate: step 1/6. In terms of biological role, catalyzes the NADPH-dependent rearrangement and reduction of 1-deoxy-D-xylulose-5-phosphate (DXP) to 2-C-methyl-D-erythritol 4-phosphate (MEP). In Shewanella halifaxensis (strain HAW-EB4), this protein is 1-deoxy-D-xylulose 5-phosphate reductoisomerase.